Here is a 679-residue protein sequence, read N- to C-terminus: Protein hook (679 aa).

Residues 6 to 123 (NEMYYSLLEW…RLLQLVLGCA (118 aa)) enclose the Calponin-homology (CH) domain. Coiled-coil stretches lie at residues 135-437 (EIMC…LKCG) and 480-574 (QTAL…QEIL).

This sequence belongs to the hook family. As to quaternary structure, homodimer. Interacts with microtubules via its N-terminus.

It is found in the cytoplasm. The protein localises to the cytoskeleton. The protein resides in the endosome. Its subcellular location is the synapse. Its function is as follows. Involved in endocytic trafficking by stabilizing organelles of the endocytic pathway. Probably acts as a cytoskeletal linker protein required to tether endosome vesicles to the cytoskeleton. Involved in modulation of endocytosis at stages required for down-regulation of membrane proteins that control synapse size. Not involved in synaptic vesicle recycling. Required in R7 cells for boss endocytosis into multivesicular bodies (MVBs). Has a role in regulating adult longevity. This chain is Protein hook, found in Drosophila simulans (Fruit fly).